Here is a 79-residue protein sequence, read N- to C-terminus: MEKLTILLLVAVVLMSTQALPQGGGEKRPRENIRFLSKRKSNAERWREGSCTSWLATCTDASQCCTGVCYKRAYCALWE.

The signal sequence occupies residues 1-19 (MEKLTILLLVAVVLMSTQA). Residues 20-47 (LPQGGGEKRPRENIRFLSKRKSNAERWR) constitute a propeptide that is removed on maturation. Intrachain disulfides connect C51-C65, C58-C69, and C64-C75.

This sequence belongs to the conotoxin O2 superfamily. Expressed by the venom duct.

It localises to the secreted. This Conus textile (Cloth-of-gold cone) protein is Conotoxin TxMEKL-021.